Consider the following 270-residue polypeptide: Tryptophan synthase alpha chain (270 aa).

Catalysis depends on proton acceptor residues E60 and D71.

This sequence belongs to the TrpA family. As to quaternary structure, tetramer of two alpha and two beta chains.

The enzyme catalyses (1S,2R)-1-C-(indol-3-yl)glycerol 3-phosphate + L-serine = D-glyceraldehyde 3-phosphate + L-tryptophan + H2O. It participates in amino-acid biosynthesis; L-tryptophan biosynthesis; L-tryptophan from chorismate: step 5/5. In terms of biological role, the alpha subunit is responsible for the aldol cleavage of indoleglycerol phosphate to indole and glyceraldehyde 3-phosphate. This Deinococcus radiodurans (strain ATCC 13939 / DSM 20539 / JCM 16871 / CCUG 27074 / LMG 4051 / NBRC 15346 / NCIMB 9279 / VKM B-1422 / R1) protein is Tryptophan synthase alpha chain.